We begin with the raw amino-acid sequence, 187 residues long: Large ribosomal subunit protein bL25 (187 aa).

This sequence belongs to the bacterial ribosomal protein bL25 family. CTC subfamily. Part of the 50S ribosomal subunit; part of the 5S rRNA/L5/L18/L25 subcomplex. Contacts the 5S rRNA. Binds to the 5S rRNA independently of L5 and L18.

In terms of biological role, this is one of the proteins that binds to the 5S RNA in the ribosome where it forms part of the central protuberance. The protein is Large ribosomal subunit protein bL25 of Tropheryma whipplei (strain Twist) (Whipple's bacillus).